The sequence spans 614 residues: Putative amino acid transporter AAT1 (614 aa).

The next 11 helical transmembrane spans lie at 184-216 (VLFL…LILL), 222-243 (YITT…YGNL), 255-275 (LIDF…LILV), 295-311 (RIFI…PLTF), 318-340 (INCF…GYQS), 360-380 (HFFK…NACF), 401-417 (ILIQ…LGYL), 437-459 (SILL…NFIA), 531-547 (CAAI…EFNV), 553-575 (FIGI…LIYY), and 587-613 (RYAT…FIII).

Belongs to the amino acid/polyamine transporter 2 family.

It localises to the vacuole membrane. Putative amino acid transporter. Involved in maintaining the osmotic homeostasis of the digestive vacuole. Important for the timely development and growth of the asexual-stage parasites and male gametocyte maturation. The chain is Putative amino acid transporter AAT1 from Plasmodium berghei (strain Anka).